The sequence spans 675 residues: TOM1-like protein 9 (675 aa).

The VHS domain maps to A9–P138. Disordered stretches follow at residues S144–F181, L270–L322, F371–M524, Q542–P561, and R622–M675. Positions E180–S268 constitute a GAT domain. 2 stretches are compositionally biased toward polar residues: residues G299–L317 and S372–V435. Residues S436–S451 are compositionally biased toward low complexity. Polar residues-rich tracts occupy residues Q470–P481 and P488–M524. The segment covering N646–K661 has biased composition (basic and acidic residues).

Belongs to the TOM1 family. Interacts with ELC/VPS23A and ELCL/VPS23B. As to expression, ubiquitously expressed.

It localises to the cytoplasm. Its subcellular location is the membrane. Functionally, might contribute to the loading of the ESCRT machinery. The sequence is that of TOM1-like protein 9 from Arabidopsis thaliana (Mouse-ear cress).